A 357-amino-acid polypeptide reads, in one-letter code: Chorismate synthase (357 aa).

Arginine 47 contacts NADP(+). FMN-binding positions include 123-125 (RAS), glycine 281, 296-300 (KPTSS), and arginine 324.

Belongs to the chorismate synthase family. In terms of assembly, homotetramer. FMNH2 is required as a cofactor.

It carries out the reaction 5-O-(1-carboxyvinyl)-3-phosphoshikimate = chorismate + phosphate. It functions in the pathway metabolic intermediate biosynthesis; chorismate biosynthesis; chorismate from D-erythrose 4-phosphate and phosphoenolpyruvate: step 7/7. Functionally, catalyzes the anti-1,4-elimination of the C-3 phosphate and the C-6 proR hydrogen from 5-enolpyruvylshikimate-3-phosphate (EPSP) to yield chorismate, which is the branch point compound that serves as the starting substrate for the three terminal pathways of aromatic amino acid biosynthesis. This reaction introduces a second double bond into the aromatic ring system. The chain is Chorismate synthase from Chlamydia trachomatis serovar L2 (strain ATCC VR-902B / DSM 19102 / 434/Bu).